The sequence spans 101 residues: Putative pterin-4-alpha-carbinolamine dehydratase (101 aa).

Belongs to the pterin-4-alpha-carbinolamine dehydratase family.

It catalyses the reaction (4aS,6R)-4a-hydroxy-L-erythro-5,6,7,8-tetrahydrobiopterin = (6R)-L-erythro-6,7-dihydrobiopterin + H2O. The sequence is that of Putative pterin-4-alpha-carbinolamine dehydratase from Burkholderia mallei (strain ATCC 23344).